We begin with the raw amino-acid sequence, 202 residues long: Imidazoleglycerol-phosphate dehydratase (202 aa).

This sequence belongs to the imidazoleglycerol-phosphate dehydratase family.

It localises to the cytoplasm. The catalysed reaction is D-erythro-1-(imidazol-4-yl)glycerol 3-phosphate = 3-(imidazol-4-yl)-2-oxopropyl phosphate + H2O. It participates in amino-acid biosynthesis; L-histidine biosynthesis; L-histidine from 5-phospho-alpha-D-ribose 1-diphosphate: step 6/9. The chain is Imidazoleglycerol-phosphate dehydratase from Synechococcus sp. (strain CC9605).